The following is a 117-amino-acid chain: Large ribosomal subunit protein bL20 (117 aa).

The protein belongs to the bacterial ribosomal protein bL20 family.

Its function is as follows. Binds directly to 23S ribosomal RNA and is necessary for the in vitro assembly process of the 50S ribosomal subunit. It is not involved in the protein synthesizing functions of that subunit. The chain is Large ribosomal subunit protein bL20 from Marinobacter nauticus (strain ATCC 700491 / DSM 11845 / VT8) (Marinobacter aquaeolei).